Consider the following 205-residue polypeptide: Coenzyme Q-binding protein COQ10, mitochondrial (205 aa).

The protein belongs to the COQ10 family. As to quaternary structure, interacts with coenzyme Q.

It localises to the mitochondrion inner membrane. Its function is as follows. Required for the function of coenzyme Q in the respiratory chain. May serve as a chaperone or may be involved in the transport of Q6 from its site of synthesis to the catalytic sites of the respiratory complexes. The sequence is that of Coenzyme Q-binding protein COQ10, mitochondrial (coq10-1) from Dictyostelium discoideum (Social amoeba).